The chain runs to 534 residues: C-type lectin domain family 18 member A (534 aa).

Residues 47–88 form a disordered region; that stretch reads GALPVAGKPEPMARSLASAPVSPWHHMDRGSTTPAKARSHSA. The SCP domain maps to 139-270; the sequence is LTAHNRLRSR…EAMEAFVCAY (132 aa). Residues 316-349 form the EGF-like domain; that stretch reads PRNPCRMSCRNLGHLNISTCRCHCQPGYTGRYCQ. 4 disulfide bridges follow: Cys324/Cys337, Cys339/Cys348, Cys415/Cys520, and Cys496/Cys512. In terms of domain architecture, C-type lectin spans 394–521; it reads IDGDCFMVSP…CKTRNRYICQ (128 aa).

It is found in the secreted. In Mus musculus (Mouse), this protein is C-type lectin domain family 18 member A (Clec18a).